The primary structure comprises 1299 residues: DNA-directed RNA polymerase subunit beta' (1299 aa).

Cys-60, Cys-62, Cys-75, and Cys-78 together coordinate Zn(2+). The disordered stretch occupies residues 188–209; the sequence is GAKSDQKRRAKDGAEKEMGQTR. Mg(2+) contacts are provided by Asp-535, Asp-537, and Asp-539. The Zn(2+) site is built by Cys-882, Cys-959, Cys-966, and Cys-969.

The protein belongs to the RNA polymerase beta' chain family. In terms of assembly, the RNAP catalytic core consists of 2 alpha, 1 beta, 1 beta' and 1 omega subunit. When a sigma factor is associated with the core the holoenzyme is formed, which can initiate transcription. Requires Mg(2+) as cofactor. The cofactor is Zn(2+).

The enzyme catalyses RNA(n) + a ribonucleoside 5'-triphosphate = RNA(n+1) + diphosphate. In terms of biological role, DNA-dependent RNA polymerase catalyzes the transcription of DNA into RNA using the four ribonucleoside triphosphates as substrates. This chain is DNA-directed RNA polymerase subunit beta', found in Clavibacter sepedonicus (Clavibacter michiganensis subsp. sepedonicus).